We begin with the raw amino-acid sequence, 478 residues long: MSSESGKPIAKPIRKPGYTNPALKALGIPALRLPSRNWMIFWSVLTVSIGGIAYDKYKQRQILSHATDLVKPLAEESMEVDKVPRKITVFIAPPPNDYLESSLKVWRRYVKPVLYYAGLDYELVQEDRQGIIRTNVANRIRELRKEILASTDGQPVKEPNQTVAKPSGSSTSKISSLLPFNKIIQDPAEEDDSFDPEIGKKFKENFDWRNVIGIFYTMPKPKHIISEDALTKDPILSGGVICLGRGAYKEYIAGIHEGLLGPIEKTEKTGSTEPKMTGVVEANQIESKVSESGATELVDAEKETALEEAKVQDDLKVDEENSSEDSQKFLKPFISSDQYPDLQIASELQTPNGEFIRNPNTNIPLLINQPLLVIPIPNLIGFTTIPRRIHRFYQKRFYVEDVCSSVVNCVRQTRIRPFDIAKDIDLAKDEEKDWPQNWVKQGKEKNSEWTQELVCDPRITKHMFVYEKPPKEEPESDI.

The Mitochondrial matrix portion of the chain corresponds to 1-32; sequence MSSESGKPIAKPIRKPGYTNPALKALGIPALR. The helical transmembrane segment at 33-49 threads the bilayer; sequence LPSRNWMIFWSVLTVSI. Residues 50-478 lie on the Mitochondrial intermembrane side of the membrane; it reads GGIAYDKYKQ…PPKEEPESDI (429 aa). Residues 152 to 171 are disordered; it reads DGQPVKEPNQTVAKPSGSST.

It belongs to the TIM54 family. Component of the TIM22 complex, whose core is composed of TIM18, TIM22 and TIM54, associated with the peripheral proteins MRS5/TIM12 and the 70 kDa heterohexamer composed of TIM9 and TIM10 (or TIM8 and TIM13).

The protein resides in the mitochondrion inner membrane. In terms of biological role, essential component of the TIM22 complex, a complex that mediates the import and insertion of multi-pass transmembrane proteins into the mitochondrial inner membrane. The TIM22 complex forms a twin-pore translocase that uses the membrane potential as external driving force. Its precise function within the TIM22 complex is unclear. This chain is Mitochondrial import inner membrane translocase subunit TIM54 (TIM54), found in Saccharomyces cerevisiae (strain ATCC 204508 / S288c) (Baker's yeast).